Consider the following 85-residue polypeptide: Large ribosomal subunit protein bL27 (85 aa).

The disordered stretch occupies residues 1–20 (MAHKKAGGSTRNGRDSEAKR).

The protein belongs to the bacterial ribosomal protein bL27 family.

The polypeptide is Large ribosomal subunit protein bL27 (Klebsiella pneumoniae (strain 342)).